The following is a 447-amino-acid chain: Cobyrinate a,c-diamide synthase (447 aa).

Residues 247 to 435 (RIGVAIDEAF…IHIHAASCPQ (189 aa)) form the GATase cobBQ-type domain. Residue C329 is the Nucleophile of the active site.

The protein belongs to the CobB/CbiA family. Mg(2+) is required as a cofactor.

The enzyme catalyses cob(II)yrinate + 2 L-glutamine + 2 ATP + 2 H2O = cob(II)yrinate a,c diamide + 2 L-glutamate + 2 ADP + 2 phosphate + 2 H(+). It carries out the reaction Ni-sirohydrochlorin + 2 L-glutamine + 2 ATP + 2 H2O = Ni-sirohydrochlorin a,c-diamide + 2 L-glutamate + 2 ADP + 2 phosphate + 2 H(+). Its pathway is cofactor biosynthesis; adenosylcobalamin biosynthesis; cob(II)yrinate a,c-diamide from sirohydrochlorin (anaerobic route): step 10/10. In terms of biological role, catalyzes the ATP-dependent amidation of the two carboxylate groups at positions a and c of cobyrinate, using either L-glutamine or ammonia as the nitrogen source. Involved in the biosynthesis of the unique nickel-containing tetrapyrrole coenzyme F430, the prosthetic group of methyl-coenzyme M reductase (MCR), which plays a key role in methanogenesis and anaerobic methane oxidation. Catalyzes the ATP-dependent amidation of the two carboxylate groups at positions a and c of Ni-sirohydrochlorin, using L-glutamine or ammonia as the nitrogen source. This Methanothermobacter thermautotrophicus (strain ATCC 29096 / DSM 1053 / JCM 10044 / NBRC 100330 / Delta H) (Methanobacterium thermoautotrophicum) protein is Cobyrinate a,c-diamide synthase.